We begin with the raw amino-acid sequence, 122 residues long: Large ribosomal subunit protein uL14 (122 aa).

Belongs to the universal ribosomal protein uL14 family. In terms of assembly, part of the 50S ribosomal subunit. Forms a cluster with proteins L3 and L19. In the 70S ribosome, L14 and L19 interact and together make contacts with the 16S rRNA in bridges B5 and B8.

In terms of biological role, binds to 23S rRNA. Forms part of two intersubunit bridges in the 70S ribosome. This Brevibacillus brevis (strain 47 / JCM 6285 / NBRC 100599) protein is Large ribosomal subunit protein uL14.